We begin with the raw amino-acid sequence, 298 residues long: Serpentine receptor class delta-34 (298 aa).

6 helical membrane passes run 10–30 (SSIMTMEANFFMCIIVVFTQV), 54–74 (ACFFSFDFFQLVFDASSFAIP), 99–119 (MILLSSYLLSLIVGVIYVITY), 158–178 (LATNLNMISIFVPPIMSIVFI), 207–227 (LTIQTLVPAVCVIPIYIAHLI), and 242–262 (VLYMMLSLPTAIDAFIVIVTI).

Belongs to the nematode receptor-like protein srd family.

The protein resides in the membrane. This is Serpentine receptor class delta-34 (srd-34) from Caenorhabditis elegans.